A 285-amino-acid polypeptide reads, in one-letter code: Large ribosomal subunit protein uL1m (285 aa).

The N-terminal 19 residues, 1 to 19, are a transit peptide targeting the mitochondrion; sequence MLSVVAIPKICVTGPARRC.

Belongs to the universal ribosomal protein uL1 family. As to quaternary structure, component of the mitochondrial large ribosomal subunit (mt-LSU). Mature yeast 74S mitochondrial ribosomes consist of a small (37S) and a large (54S) subunit. The 37S small subunit contains a 15S ribosomal RNA (15S mt-rRNA) and 34 different proteins. The 54S large subunit contains a 21S rRNA (21S mt-rRNA) and 46 different proteins.

It is found in the mitochondrion. Component of the mitochondrial ribosome (mitoribosome), a dedicated translation machinery responsible for the synthesis of mitochondrial genome-encoded proteins, including at least some of the essential transmembrane subunits of the mitochondrial respiratory chain. The mitoribosomes are attached to the mitochondrial inner membrane and translation products are cotranslationally integrated into the membrane. This chain is Large ribosomal subunit protein uL1m (MRPL1), found in Saccharomyces cerevisiae (strain ATCC 204508 / S288c) (Baker's yeast).